A 469-amino-acid polypeptide reads, in one-letter code: MNQFDKKSQAWSALFSEPMSDLVKRYTSSVFFDKRLWQADIAGSLAHADMLAAQSIIAPADHAAIQYGMAQITREIEAGEFEWKLDLEDVHLNIEARLTQLVGDPGKRLHTGRSRNDQVATDVRLWLRGEIDLIGGLLTDLQKALVEIADKNVEVILPGFTHLQVAQPVSFGHHMLAYVEMFSRDAERMLEVRRRVNRLPLGAAALAGTSYPLDRERVATTLGMVDEQGQPQVCQNSLDAVSDRDFAIEFTAAASLAMVHISRFSEELILWMSQNFGFINIADRFTTGSSIMPQKKNPDVPELARGKTGRVVGHLMGLITLMKGQPLAYNKDNQEDKEPLFDTVDTLKDTLRIFAEMVGGITVKPEAMERAALRGYATATDLADYLTKKGLPFRDAHETVAHAVKAATTHQVDLSELPLAVLQEFNPSIEKDVYEVLSLRGSLNARNILGGTAPAQVRAQIARHRARLG.

It belongs to the lyase 1 family. Argininosuccinate lyase subfamily.

The protein localises to the cytoplasm. The catalysed reaction is 2-(N(omega)-L-arginino)succinate = fumarate + L-arginine. Its pathway is amino-acid biosynthesis; L-arginine biosynthesis; L-arginine from L-ornithine and carbamoyl phosphate: step 3/3. This Polaromonas naphthalenivorans (strain CJ2) protein is Argininosuccinate lyase.